We begin with the raw amino-acid sequence, 357 residues long: Arginine kinase (357 aa).

Ala-2 carries the post-translational modification N-acetylalanine. The Phosphagen kinase N-terminal domain occupies 9 to 91 (KLEEGFKKLQ…FDPIIEDYHK (83 aa)). Residue 64 to 68 (GVGVY) coordinates L-arginine. The Phosphagen kinase C-terminal domain occupies 119–356 (FVISTRVRCG…LELIKIEKEM (238 aa)). ATP-binding positions include 122 to 126 (STRVR) and His-185. Glu-225 lines the L-arginine pocket. ATP is bound at residue Arg-229. Cys-271 is an L-arginine binding site. Residues 280 to 284 (RASVH) and 309 to 314 (RGTRGE) contribute to the ATP site. Glu-314 serves as a coordination point for L-arginine.

It belongs to the ATP:guanido phosphotransferase family.

The enzyme catalyses L-arginine + ATP = N(omega)-phospho-L-arginine + ADP + H(+). The sequence is that of Arginine kinase from Pachygrapsus marmoratus (Marbled rock crab).